We begin with the raw amino-acid sequence, 693 residues long: UvrABC system protein B (693 aa).

Positions Glu-35–Ile-188 constitute a Helicase ATP-binding domain. Gly-48–Ser-55 serves as a coordination point for ATP. The Beta-hairpin motif lies at Tyr-101–Val-124. Residues Gln-438–Ile-600 enclose the Helicase C-terminal domain. The segment at Ala-612–Val-634 is disordered. One can recognise a UVR domain in the interval Val-648–Glu-683.

Belongs to the UvrB family. As to quaternary structure, forms a heterotetramer with UvrA during the search for lesions. Interacts with UvrC in an incision complex.

The protein localises to the cytoplasm. In terms of biological role, the UvrABC repair system catalyzes the recognition and processing of DNA lesions. A damage recognition complex composed of 2 UvrA and 2 UvrB subunits scans DNA for abnormalities. Upon binding of the UvrA(2)B(2) complex to a putative damaged site, the DNA wraps around one UvrB monomer. DNA wrap is dependent on ATP binding by UvrB and probably causes local melting of the DNA helix, facilitating insertion of UvrB beta-hairpin between the DNA strands. Then UvrB probes one DNA strand for the presence of a lesion. If a lesion is found the UvrA subunits dissociate and the UvrB-DNA preincision complex is formed. This complex is subsequently bound by UvrC and the second UvrB is released. If no lesion is found, the DNA wraps around the other UvrB subunit that will check the other stand for damage. The polypeptide is UvrABC system protein B (Renibacterium salmoninarum (strain ATCC 33209 / DSM 20767 / JCM 11484 / NBRC 15589 / NCIMB 2235)).